The primary structure comprises 376 residues: MRRGLLQQVRRVVIKVGSRVLTVEGGGLDYDAISRLCDEMAGLRQQGIEVILVSSGAVAAGRDALRSADTTLTIPQKQAAAAVGQPLLMQAYQQACTRHGLVTAQILLTAEDLANRNRFLNARTTLEALLTAGALPVINENDSVAVAEIKFGDNDNLSALVTSLAEADLLLILTDIEGLYSANPASDPDAELIPLVRSITREIERMAGGSGSNVGTGGMATKVTAAKKAARFGVPTILAPGKQPGVITAAVSGQEIGTLFLPATDGLNRRKHWIAYTLRPAGKVLVDAGAQKALVEKGTSLLPSGITGVEGRFERGRCVRICGPDGTEIARGLADYSSSEIQLIAGHKSAEIEQLLGYRYGDDVVHRDNLVLMTHS.

Residue Lys-15 participates in ATP binding. Substrate contacts are provided by Ser-55, Asp-142, and Asn-154. ATP is bound by residues 174–175 (TD) and 216–222 (TGGMATK). The PUA domain occupies 281–359 (AGKVLVDAGA…AEIEQLLGYR (79 aa)).

Belongs to the glutamate 5-kinase family.

The protein resides in the cytoplasm. It carries out the reaction L-glutamate + ATP = L-glutamyl 5-phosphate + ADP. Its pathway is amino-acid biosynthesis; L-proline biosynthesis; L-glutamate 5-semialdehyde from L-glutamate: step 1/2. Functionally, catalyzes the transfer of a phosphate group to glutamate to form L-glutamate 5-phosphate. The polypeptide is Glutamate 5-kinase (Trichlorobacter lovleyi (strain ATCC BAA-1151 / DSM 17278 / SZ) (Geobacter lovleyi)).